Reading from the N-terminus, the 159-residue chain is MRIVLQKVSEGSVDVVDETSGEVDTTFEPQHIGIGYVLLVGVEDTDGAKQIDWLAHKIANLRVFEDENGKMNRSIHDVDGSVLSISQFTLYADVRKGNRPSFVKAGAPDHAEQVWHAFNDALRAQGLDVKEGRFGAHMRVSLTNDGPVTIIFDTDELGI.

A Gly-cisPro motif, important for rejection of L-amino acids motif is present at residues 146 to 147 (GP).

It belongs to the DTD family. Homodimer.

It is found in the cytoplasm. It catalyses the reaction glycyl-tRNA(Ala) + H2O = tRNA(Ala) + glycine + H(+). The enzyme catalyses a D-aminoacyl-tRNA + H2O = a tRNA + a D-alpha-amino acid + H(+). Functionally, an aminoacyl-tRNA editing enzyme that deacylates mischarged D-aminoacyl-tRNAs. Also deacylates mischarged glycyl-tRNA(Ala), protecting cells against glycine mischarging by AlaRS. Acts via tRNA-based rather than protein-based catalysis; rejects L-amino acids rather than detecting D-amino acids in the active site. By recycling D-aminoacyl-tRNA to D-amino acids and free tRNA molecules, this enzyme counteracts the toxicity associated with the formation of D-aminoacyl-tRNA entities in vivo and helps enforce protein L-homochirality. In Bifidobacterium adolescentis (strain ATCC 15703 / DSM 20083 / NCTC 11814 / E194a), this protein is D-aminoacyl-tRNA deacylase.